A 567-amino-acid chain; its full sequence is DNA-binding protein REPIN1 (567 aa).

Residues 17 to 52 (PRLLSGPSQESPQTLGKESRGLRQQGTSVAQSGAQA) form a disordered region. Residues 22-50 (GPSQESPQTLGKESRGLRQQGTSVAQSGA) show a composition bias toward polar residues. A Phosphoserine modification is found at serine 27. Threonine 30 bears the Phosphothreonine mark. Residue lysine 33 is modified to N6-acetyllysine. The C2H2-type 1; atypical zinc finger occupies 57 to 79 (HRCAHCRRHFPGWVALWLHTRRC). C2H2-type zinc fingers lie at residues 85–107 (LPCP…RQVH), 116–138 (FACH…LRAH), 145–168 (IACP…RRCH), 177–199 (FICG…KRVH), 236–258 (FQCA…RRVH), 264–286 (HQCP…RRIH), and 292–314 (YPCK…SKIH). At lysine 276 the chain carries N6-acetyllysine. Residues 305 to 315 (PNLLSHSKIHK) are compositionally biased toward basic residues. The disordered stretch occupies residues 305–372 (PNLLSHSKIH…HPQDPIEAPP (68 aa)). Over residues 345–362 (PAVPLKPAQEPPPGAPPE) the composition is skewed to pro residues. 7 consecutive C2H2-type zinc fingers follow at residues 375–397 (YSCD…QRQH), 403–425 (FTCA…SRVH), 431–453 (FACE…RRDH), 459–481 (FVCP…RRIH), 487–509 (YVCP…RRIH), 515–537 (YACP…RKSH), and 543–565 (FCCA…QKKH).

In terms of assembly, homodimers and homomultimers. Found in a complex with RIP60 and RIP100. Expressed in adipose tissue and bone tissue.

It localises to the nucleus. The protein localises to the cytoplasm. The protein resides in the cytosol. Functionally, sequence-specific double-stranded DNA-binding protein. Binds ATT-rich and T-rich DNA sequences and facilitates DNA bending. May regulate the expression of genes involved in cellular fatty acid import, including SCARB1/CD36, and genes involved in lipid droplet formation. May regulate the expression of LCN2, and thereby influence iron metabolism and apoptosis-related pathways. May regulate the expression of genes involved in glucose transport. This chain is DNA-binding protein REPIN1 (REPIN1), found in Homo sapiens (Human).